The primary structure comprises 536 residues: C-22 sterol desaturase ERG5A (536 aa).

Residues valine 41–isoleucine 61 form a helical membrane-spanning segment. Cysteine 481 lines the heme pocket.

The protein belongs to the cytochrome P450 family. Heme is required as a cofactor.

It is found in the endoplasmic reticulum membrane. It catalyses the reaction 5-dehydroepisterol + NADPH + O2 + H(+) = ergosta-5,7,22,24(28)-tetraen-3beta-ol + NADP(+) + 2 H2O. Its pathway is steroid metabolism; ergosterol biosynthesis. C-22 sterol desaturase; part of the third module of ergosterol biosynthesis pathway that includes the late steps of the pathway. ERG5A and ERG5B convert 5-dehydroepisterol into ergosta-5,7,22,24(28)-tetraen-3beta-ol by forming the C-22(23) double bond in the sterol side chain. The third module or late pathway involves the ergosterol synthesis itself through consecutive reactions that mainly occur in the endoplasmic reticulum (ER) membrane. Firstly, the squalene synthase ERG9 catalyzes the condensation of 2 farnesyl pyrophosphate moieties to form squalene, which is the precursor of all steroids. Squalene synthase is crucial for balancing the incorporation of farnesyl diphosphate (FPP) into sterol and nonsterol isoprene synthesis. Secondly, squalene is converted into lanosterol by the consecutive action of the squalene epoxidase ERG1 and the lanosterol synthase ERG7. Then, the delta(24)-sterol C-methyltransferase ERG6 methylates lanosterol at C-24 to produce eburicol. Eburicol is the substrate of the sterol 14-alpha demethylase encoded by CYP51A, CYP51B and CYP51C, to yield 4,4,24-trimethyl ergosta-8,14,24(28)-trienol. CYP51B encodes the enzyme primarily responsible for sterol 14-alpha-demethylation, and plays an essential role in ascospore formation. CYP51A encodes an additional sterol 14-alpha-demethylase, induced on ergosterol depletion and responsible for the intrinsic variation in azole sensitivity. The third CYP51 isoform, CYP51C, does not encode a sterol 14-alpha-demethylase, but is required for full virulence on host wheat ears. The C-14 reductase ERG24 then reduces the C14=C15 double bond which leads to 4,4-dimethylfecosterol. A sequence of further demethylations at C-4, involving the C-4 demethylation complex containing the C-4 methylsterol oxidases ERG25, the sterol-4-alpha-carboxylate 3-dehydrogenase ERG26 and the 3-keto-steroid reductase ERG27, leads to the production of fecosterol via 4-methylfecosterol. ERG28 has a role as a scaffold to help anchor ERG25, ERG26 and ERG27 to the endoplasmic reticulum. The C-8 sterol isomerase ERG2 then catalyzes the reaction which results in unsaturation at C-7 in the B ring of sterols and thus converts fecosterol to episterol. The sterol-C5-desaturases ERG3A and ERG3BB then catalyze the introduction of a C-5 double bond in the B ring to produce 5-dehydroepisterol. The C-22 sterol desaturases ERG5A and ERG5B further convert 5-dehydroepisterol into ergosta-5,7,22,24(28)-tetraen-3beta-ol by forming the C-22(23) double bond in the sterol side chain. Finally, ergosta-5,7,22,24(28)-tetraen-3beta-ol is substrate of the C-24(28) sterol reductase ERG4 to produce ergosterol. This chain is C-22 sterol desaturase ERG5A, found in Gibberella zeae (strain ATCC MYA-4620 / CBS 123657 / FGSC 9075 / NRRL 31084 / PH-1) (Wheat head blight fungus).